The sequence spans 355 residues: Ribosomal RNA small subunit methyltransferase H (355 aa).

S-adenosyl-L-methionine-binding positions include Gly47–Tyr49, Asp65, Phe92, Asp113, and Gln120. Residues Leu332–Arg355 form a disordered region. A compositionally biased stretch (basic residues) spans Ser346 to Arg355.

This sequence belongs to the methyltransferase superfamily. RsmH family.

It is found in the cytoplasm. It carries out the reaction cytidine(1402) in 16S rRNA + S-adenosyl-L-methionine = N(4)-methylcytidine(1402) in 16S rRNA + S-adenosyl-L-homocysteine + H(+). Its function is as follows. Specifically methylates the N4 position of cytidine in position 1402 (C1402) of 16S rRNA. The polypeptide is Ribosomal RNA small subunit methyltransferase H (Beijerinckia indica subsp. indica (strain ATCC 9039 / DSM 1715 / NCIMB 8712)).